The chain runs to 214 residues: Large ribosomal subunit protein bL25 (214 aa).

Positions 178-214 (VEPEEEELPETDEEGEGAEGEAAEAAEGESAEGESEE) are disordered. Over residues 179-214 (EPEEEELPETDEEGEGAEGEAAEAAEGESAEGESEE) the composition is skewed to acidic residues.

It belongs to the bacterial ribosomal protein bL25 family. CTC subfamily. Part of the 50S ribosomal subunit; part of the 5S rRNA/L5/L18/L25 subcomplex. Contacts the 5S rRNA. Binds to the 5S rRNA independently of L5 and L18.

Functionally, this is one of the proteins that binds to the 5S RNA in the ribosome where it forms part of the central protuberance. The chain is Large ribosomal subunit protein bL25 from Corynebacterium jeikeium (strain K411).